The sequence spans 161 residues: Large ribosomal subunit protein uL15 (161 aa).

The segment at 1-50 (MKLSDIADNAGSRKKRMRIGRGIGSGKGKTGGRGGKGQTARSGVRINGFE) is disordered. The span at 21–37 (RGIGSGKGKTGGRGGKG) shows a compositional bias: gly residues.

The protein belongs to the universal ribosomal protein uL15 family. As to quaternary structure, part of the 50S ribosomal subunit.

In terms of biological role, binds to the 23S rRNA. The protein is Large ribosomal subunit protein uL15 of Nitrobacter winogradskyi (strain ATCC 25391 / DSM 10237 / CIP 104748 / NCIMB 11846 / Nb-255).